The primary structure comprises 464 residues: Gamma-aminobutyric acid receptor subunit rho-3 (464 aa).

The first 15 residues, 1-15 (MVLAFWLAFFTYTWI), serve as a signal peptide directing secretion. Topologically, residues 16–263 (TLMLDASAVK…LFINFVLRRH (248 aa)) are extracellular. Arginine 108 contributes to the 4-aminobutanoate binding site. Asparagine 123 carries N-linked (GlcNAc...) asparagine glycosylation. Residue serine 172 participates in 4-aminobutanoate binding. Cysteines 181 and 195 form a disulfide. A glycan (N-linked (GlcNAc...) asparagine) is linked at asparagine 194. Residue glutamate 200 participates in 4-aminobutanoate binding. Residues 264–284 (IFFFVLQTYFPAMLMVMLSWV) form a helical membrane-spanning segment. Residues 285-296 (SFWIDRRAVPAR) are Cytoplasmic-facing. A helical transmembrane segment spans residues 297–317 (VSLGITTVLTMSTIVTGVSAS). The Extracellular portion of the chain corresponds to 318-328 (MPQVSYVKAVD). A helical transmembrane segment spans residues 329–349 (VYMWVSSLFVFLSVIEYAAVN). The interval 344–445 (EYAAVNYLTT…NNHVIDTYSR (102 aa)) is interaction with SQSTM1. Residues 350–443 (YLTTVEEWKQ…LENNHVIDTY (94 aa)) are Cytoplasmic-facing. The chain crosses the membrane as a helical span at residues 444–464 (SRIVFPVVYIIFNLFYWGIYV).

This sequence belongs to the ligand-gated ion channel (TC 1.A.9) family. Gamma-aminobutyric acid receptor (TC 1.A.9.5) subfamily. GABRR3 sub-subfamily. In terms of assembly, three rho subunits (rho-1/GBRR1, rho-2/GBRR2 and rho-3/GBRR3) coassemble either to form functional homopentamers or heteropentamers. Forms a ternary complex with SQSTM1 and PRKCZ. Expressed in retina.

It is found in the postsynaptic cell membrane. The protein resides in the cell membrane. The catalysed reaction is chloride(in) = chloride(out). With respect to regulation, activated by agonists in the following the potency order: muscimol &gt; TACP &gt; TACA &gt; thiomuscimol &gt; CAMP &gt; CACA, when forming a homopentamer. Inhibited by TPMPA, a rho-specific antagonist, when forming a homopentamer. Inhibited antagonists in the following the potency order: TAMP = TPMPA &gt; P4MPA = THIP &gt; 14AA &gt; 3-APA, when forming a homopentamer. Its function is as follows. Rho subunit of the pentameric ligand-gated chloride channels responsible for mediating the effects of gamma-aminobutyric acid (GABA), the major inhibitory neurotransmitter in the brain. Rho-containing GABA-gated chloride channels are a subclass of GABA(A) receptors (GABAARs) entirely composed of rho subunits, where GABA molecules bind at the rho intersubunit interfaces. When activated by GABA, rho-GABAARs selectively allow the flow of chloride anions across the cell membrane down their electrochemical gradient. This Rattus norvegicus (Rat) protein is Gamma-aminobutyric acid receptor subunit rho-3.